Reading from the N-terminus, the 1469-residue chain is Protein BCL9 homolog (1469 aa).

Residues 1–16 (MLSTTMPRSPTQQQPQ) are compositionally biased toward polar residues. Disordered regions lie at residues 1 to 131 (MLST…NVSA), 161 to 187 (SNKA…KEEP), 200 to 222 (EERE…NAQD), 422 to 442 (ENSK…QSDP), and 454 to 474 (GGSS…DSIS). Phosphoserine is present on serine 9. Residue threonine 11 is modified to Phosphothreonine. A compositionally biased stretch (low complexity) spans 17–34 (PNSDASSTSASGSNPGAA). Composition is skewed to polar residues over residues 40–60 (SAAS…TLSP) and 90–113 (SGNN…NSCL). Low complexity predominate over residues 116 to 130 (SPQNSSEHSNSSNVS). Serine 206 carries the post-translational modification Phosphoserine. The residue at position 208 (threonine 208) is a Phosphothreonine. The residue at position 210 (serine 210) is a Phosphoserine. 2 stretches are compositionally biased toward polar residues: residues 422-438 (ENSK…SFVD) and 455-474 (GSSN…DSIS). The segment at 511-555 (SLQGVKVPDENLTPQQRQHREEQLAKIKKMNQFLFPENENSVGAN) is ARM-binding. Disordered regions lie at residues 728–830 (GGKP…TSTV), 844–913 (CFQA…RSPV), and 961–991 (QASA…PPPN). Residues 731 to 745 (PRQVTGTVVPQQQTP) are compositionally biased toward low complexity. Residues 770-781 (IQRSASVPIATQ) are compositionally biased toward polar residues. Low complexity predominate over residues 782 to 796 (SPNPSSPNNLSLPSP). Polar residues-rich tracts occupy residues 806–830 (PTNS…TSTV) and 844–880 (CFQA…TPLS). 3 positions are modified to phosphoserine: serine 883, serine 905, and serine 911. Polar residues predominate over residues 904-913 (PSPQGQRSPV).

It belongs to the BCL9 family. In terms of assembly, binds to ARM and PYGO.

It localises to the nucleus. Its function is as follows. Involved in signal transduction through the Wnt pathway. The protein is Protein BCL9 homolog (lgs) of Drosophila melanogaster (Fruit fly).